The primary structure comprises 448 residues: Ribosomal protein uS12 methylthiotransferase RimO (448 aa).

One can recognise an MTTase N-terminal domain in the interval 7–123; sequence EKVSLVSLGC…IAEIIAEKKQ (117 aa). Residues Cys-16, Cys-52, Cys-86, Cys-161, Cys-165, and Cys-168 each coordinate [4Fe-4S] cluster. In terms of domain architecture, Radical SAM core spans 147–377; it reads SSPHYTAYLK…MRTQARVSFK (231 aa). A TRAM domain is found at 380–448; the sequence is RTLVDSEEDV…DYDLIGEIVD (69 aa).

This sequence belongs to the methylthiotransferase family. RimO subfamily. The cofactor is [4Fe-4S] cluster.

It is found in the cytoplasm. The catalysed reaction is L-aspartate(89)-[ribosomal protein uS12]-hydrogen + (sulfur carrier)-SH + AH2 + 2 S-adenosyl-L-methionine = 3-methylsulfanyl-L-aspartate(89)-[ribosomal protein uS12]-hydrogen + (sulfur carrier)-H + 5'-deoxyadenosine + L-methionine + A + S-adenosyl-L-homocysteine + 2 H(+). In terms of biological role, catalyzes the methylthiolation of an aspartic acid residue of ribosomal protein uS12. The chain is Ribosomal protein uS12 methylthiotransferase RimO from Citrifermentans bemidjiense (strain ATCC BAA-1014 / DSM 16622 / JCM 12645 / Bem) (Geobacter bemidjiensis).